We begin with the raw amino-acid sequence, 465 residues long: COP9 signalosome complex subunit 5 (465 aa).

Positions 74–216 (VLLSKLACSK…IGSFRTYQDQ (143 aa)) constitute an MPN domain. Zn(2+) contacts are provided by histidine 162, histidine 164, and aspartate 175. The JAMM motif signature appears at 162-175 (HSHPGYDCWLSNID). Residues 364–386 (SSIHTQMNNQNNQQERNSPKRPH) are disordered.

Belongs to the peptidase M67A family. CSN5 subfamily. As to quaternary structure, component of the COP9 signalosome (CSN) complex.

Its subcellular location is the cytoplasm. It localises to the nucleus. Its function is as follows. Catalytic Component of the COP9 signalosome (CSN) complex that acts as an regulator of the ubiquitin (Ubl) conjugation pathway by mediating the deneddylation of the cullin subunit of SCF-type E3 ubiquitin-protein ligase complexes. The sequence is that of COP9 signalosome complex subunit 5 (RRI1) from Candida glabrata (strain ATCC 2001 / BCRC 20586 / JCM 3761 / NBRC 0622 / NRRL Y-65 / CBS 138) (Yeast).